We begin with the raw amino-acid sequence, 350 residues long: Methionine import ATP-binding protein MetN (350 aa).

One can recognise an ABC transporter domain in the interval 2 to 241 (IQIKNLKKEY…PQAPVTRSFV (240 aa)). 38–45 (GHSGAGKS) contributes to the ATP binding site.

This sequence belongs to the ABC transporter superfamily. Methionine importer (TC 3.A.1.24) family. In terms of assembly, the complex is composed of two ATP-binding proteins (MetN), two transmembrane proteins (MetI) and a solute-binding protein (MetQ).

The protein localises to the cell inner membrane. The catalysed reaction is L-methionine(out) + ATP + H2O = L-methionine(in) + ADP + phosphate + H(+). It carries out the reaction D-methionine(out) + ATP + H2O = D-methionine(in) + ADP + phosphate + H(+). Functionally, part of the ABC transporter complex MetNIQ involved in methionine import. Responsible for energy coupling to the transport system. This is Methionine import ATP-binding protein MetN from Francisella tularensis subsp. tularensis (strain FSC 198).